We begin with the raw amino-acid sequence, 282 residues long: Orotidine 5'-phosphate decarboxylase (282 aa).

Lys-95 acts as the Proton donor in catalysis.

Belongs to the OMP decarboxylase family. Type 2 subfamily.

The catalysed reaction is orotidine 5'-phosphate + H(+) = UMP + CO2. It participates in pyrimidine metabolism; UMP biosynthesis via de novo pathway; UMP from orotate: step 2/2. The sequence is that of Orotidine 5'-phosphate decarboxylase from Polaromonas naphthalenivorans (strain CJ2).